The following is a 224-amino-acid chain: Thylakoid lumenal 15 kDa protein 1, chloroplastic (224 aa).

Residues 1–34 constitute a chloroplast transit peptide; it reads MVILSNVSLFSCCNISQKPSLFSPSSRSSHCPIR. The transit peptide at 35–81 directs the protein to the thylakoid; sequence CSQSQEGKEVVTSPLRSVVWSLGEEVSKRSLFALVSASLFFVDPALA. Pentapeptide repeat domains follow at residues 116-155 and 156-196; these read SILR…DFSL and ANVT…PLRD.

The protein localises to the plastid. It localises to the chloroplast thylakoid lumen. The chain is Thylakoid lumenal 15 kDa protein 1, chloroplastic from Arabidopsis thaliana (Mouse-ear cress).